Here is a 409-residue protein sequence, read N- to C-terminus: Phenoxybenzoate dioxygenase subunit alpha (409 aa).

The region spanning 45-149 is the Rieske domain; it reads WQPVALSADV…VEERYGLVFA (105 aa). 4 residues coordinate [2Fe-2S] cluster: Cys85, His87, Cys104, and His107. Fe cation-binding residues include His210 and His215.

The protein belongs to the bacterial ring-hydroxylating dioxygenase alpha subunit family. This dioxygenase system consists of two proteins: the alpha subunit (PobA) and a subunit (PobB) that acts as a ferredoxin and a ferredoxin reductase. [2Fe-2S] cluster is required as a cofactor. Requires Fe cation as cofactor.

Its pathway is aromatic compound metabolism; carboxydiphenyl ether degradation. In terms of biological role, degrades exclusively diarylether compounds having carboxyl groups in the 3- or 4-position. Yields a hemiacetal that spontaneously hydrolyzes to phenol and protocatechuate. The protein is Phenoxybenzoate dioxygenase subunit alpha (pobA) of Ectopseudomonas oleovorans (Pseudomonas oleovorans).